The primary structure comprises 191 residues: Putative glutathione-dependent formaldehyde-activating enzyme (191 aa).

Positions 20–166 (FPGGNLYCLC…FQSLGLQTYD (147 aa)) constitute a CENP-V/GFA domain. Residues Cys27, Cys29, Cys48, Cys50, Cys53, Cys95, and Cys98 each coordinate Zn(2+).

Belongs to the Gfa family. Zn(2+) is required as a cofactor.

The catalysed reaction is S-(hydroxymethyl)glutathione = glutathione + formaldehyde. The protein operates within one-carbon metabolism; formaldehyde degradation; formate from formaldehyde (glutathione route): step 1/3. Catalyzes the condensation of formaldehyde and glutathione to S-hydroxymethylglutathione. This Aspergillus flavus (strain ATCC 200026 / FGSC A1120 / IAM 13836 / NRRL 3357 / JCM 12722 / SRRC 167) protein is Putative glutathione-dependent formaldehyde-activating enzyme.